A 509-amino-acid polypeptide reads, in one-letter code: Dihydrolipoyl dehydrogenase, mitochondrial (509 aa).

A mitochondrion-targeting transit peptide spans 1 to 35 (MQSWSRVYCSLAKRGHFNRISHGLQGLSAVPLRTY). An N6-acetyllysine; alternate modification is found at Lys-66. Lys-66 is modified (N6-succinyllysine; alternate). Residues 71-80 (EKNETLGGTC) and Lys-89 each bind FAD. The cysteines at positions 80 and 85 are disulfide-linked. Lys-104, Lys-122, Lys-132, and Lys-143 each carry N6-acetyllysine; alternate. N6-succinyllysine; alternate is present on residues Lys-104, Lys-122, Lys-132, and Lys-143. Residue Gly-154 coordinates FAD. An N6-succinyllysine mark is found at Lys-159 and Lys-166. Position 183–185 (183–185 (TGS)) interacts with FAD. Residues 220–227 (GAGVIGVE) and Glu-243 each bind NAD(+). An N6-succinyllysine mark is found at Lys-273 and Lys-277. Residue Val-278 participates in NAD(+) binding. A phosphoserine mark is found at Ser-285 and Ser-297. Position 314 (Gly-314) interacts with NAD(+). Residue Lys-346 is modified to N6-acetyllysine. FAD contacts are provided by residues Asp-355 and 361–364 (MLAH). Lys-410 is modified (N6-acetyllysine; alternate). Lys-410 carries the N6-succinyllysine; alternate modification. Residues Lys-417 and Lys-420 each carry the N6-acetyllysine modification. Lys-430 is modified (N6-succinyllysine). Residue His-487 is the Proton acceptor of the active site. A Phosphoserine modification is found at Ser-502. Lys-505 bears the N6-acetyllysine; alternate mark. The residue at position 505 (Lys-505) is an N6-succinyllysine; alternate.

Belongs to the class-I pyridine nucleotide-disulfide oxidoreductase family. As to quaternary structure, homodimer. Part of the multimeric pyruvate dehydrogenase complex that contains multiple copies of pyruvate dehydrogenase (subunits PDHA (PDHA1 or PDHA2) and PDHB, E1), dihydrolipoamide acetyltransferase (DLAT, E2) and lipoamide dehydrogenase (DLD, E3). These subunits are bound to an inner core composed of about 48 DLAT and 12 PDHX molecules (by non covalent bonds). The 2-oxoglutarate dehydrogenase complex is composed of OGDH (2-oxoglutarate dehydrogenase; E1), DLST (dihydrolipoamide succinyltransferase; E2), DLD (dihydrolipoamide dehydrogenase; E3) and the assembly factor KGD4. It contains multiple copies of the three enzymatic components (E1, E2 and E3). In the nucleus, the 2-oxoglutarate dehydrogenase complex associates with KAT2A. Interacts with PDHX. FAD serves as cofactor. Post-translationally, tyrosine phosphorylated.

It localises to the mitochondrion matrix. The protein localises to the nucleus. The protein resides in the cell projection. It is found in the cilium. Its subcellular location is the flagellum. It localises to the cytoplasmic vesicle. The protein localises to the secretory vesicle. The protein resides in the acrosome. It carries out the reaction N(6)-[(R)-dihydrolipoyl]-L-lysyl-[protein] + NAD(+) = N(6)-[(R)-lipoyl]-L-lysyl-[protein] + NADH + H(+). Lipoamide dehydrogenase is a component of the glycine cleavage system as well as an E3 component of three alpha-ketoacid dehydrogenase complexes (pyruvate-, alpha-ketoglutarate-, and branched-chain amino acid-dehydrogenase complex). The 2-oxoglutarate dehydrogenase complex is mainly active in the mitochondrion. A fraction of the 2-oxoglutarate dehydrogenase complex also localizes in the nucleus and is required for lysine succinylation of histones: associates with KAT2A on chromatin and provides succinyl-CoA to histone succinyltransferase KAT2A. In monomeric form may have additional moonlighting function as serine protease. Involved in the hyperactivation of spermatazoa during capacitation and in the spermatazoal acrosome reaction. The protein is Dihydrolipoyl dehydrogenase, mitochondrial (DLD) of Pongo abelii (Sumatran orangutan).